Consider the following 997-residue polypeptide: Protein argonaute 5 (997 aa).

2 stretches are compositionally biased toward gly residues: residues 1–16 (MSNRGGGGHGGASRGR) and 43–59 (GGRGGSVSAGRGRGNVG). The interval 1 to 144 (MSNRGGGGHG…TSLPPASSKA (144 aa)) is disordered. A compositionally biased stretch (low complexity) spans 93–106 (SVASSSKTVSVASS). The segment covering 116-129 (VSETMSNLQITSTE) has biased composition (polar residues). One can recognise a PAZ domain in the interval 360–471 (VVTDFISKFL…LPMELCQIDE (112 aa)). A Piwi domain is found at 638–958 (LLIVILPDVT…AAFRARYYME (321 aa)). Residues aspartate 721 and aspartate 807 each contribute to the a divalent metal cation site. 3 interaction with guide RNA regions span residues 847–848 (KR), 893–901 (HAGIQGTSR), and 930–952 (YARCTKSVSIVPPAYYAHLAAFR). Histidine 947 contributes to the a divalent metal cation binding site.

Belongs to the argonaute family. Ago subfamily. Requires Mg(2+) as cofactor. Mn(2+) is required as a cofactor.

Functionally, involved in RNA-mediated post-transcriptional gene silencing (PTGS). Main component of the RNA-induced silencing complex (RISC) that binds to a short guide RNA such as a microRNA (miRNA) or small interfering RNA (siRNA). RISC uses the mature miRNA or siRNA as a guide for slicer-directed cleavage of homologous mRNAs to repress gene expression. Associates with siRNAs of various sizes, from 21-24 nucleotide in length and preferentially recruits small RNAs with a 5' terminal cytosine. Probably involved in antiviral RNA silencing. Associates with siRNAs derived from cucumber mosaic virus (CMV). Targeted by the turnip yellows virus (TuYV) protein P0 (via F-box-like domain) for probable proteasome degradation and thereby inactivating AGO5 function in RNA silencing. The chain is Protein argonaute 5 (AGO5) from Arabidopsis thaliana (Mouse-ear cress).